A 189-amino-acid chain; its full sequence is Thermostable direct hemolysin-related (189 aa).

The first 24 residues, 1 to 24 (MKYRYFAKKSFLFISMLAAFKTFA), serve as a signal peptide directing secretion. Residues Cys175 and Cys185 are joined by a disulfide bond.

It belongs to the TDH hemolysin family. Homodimer.

In terms of biological role, bacterial hemolysins are exotoxins that attack blood cell membranes and cause cell rupture by mechanisms not clearly defined. The chain is Thermostable direct hemolysin-related (tdh3) from Vibrio parahaemolyticus.